The primary structure comprises 230 residues: Secretory carrier-associated membrane protein 4 (230 aa).

Topologically, residues 1–39 are cytoplasmic; sequence MAGKENNFPPLPPFLPLKPCFYQDFSDEIPVEHQVLVKR. 4 consecutive transmembrane segments (helical) span residues 40 to 60, 61 to 81, 106 to 126, and 149 to 169; these read IYRL…ACLA, WWIA…LVLF, MTFF…AIGF, and VVML…AVTI. At 170 to 230 the chain is on the cytoplasmic side; sequence VKVHRIYRGA…SYSSSGGHWP (61 aa). Thr194 carries the phosphothreonine modification.

The protein belongs to the SCAMP family.

It localises to the membrane. Probably involved in membrane protein trafficking. This Mus musculus (Mouse) protein is Secretory carrier-associated membrane protein 4 (Scamp4).